The following is a 327-amino-acid chain: uncharacterized protein (327 aa).

Residues 1-19 (MSIAQDRGIVFKLLSIYRA) lie on the Cytoplasmic side of the membrane. A helical transmembrane segment spans residues 20 to 40 (AAGIFMALAQLIVIFFGYCDF). The Extracellular segment spans residues 41–51 (KIKGYRIASYN). The helical transmembrane segment at 52–72 (APTFASSFIILAVCLLLVVVL) threads the bilayer. Over 73–104 (ENPEVKVTNSENSLFSALKQFFRVERKKLISC) the chain is Cytoplasmic. Residues 105 to 125 (LILLWSMFLSSFIMSEVVYFM) traverse the membrane as a helical segment. Over 126–141 (PLFLTLHVNWDTKFQG) the chain is Extracellular. Residues 142 to 162 (IAFMVASILGVTGSYFAPKLI) traverse the membrane as a helical segment. Topologically, residues 163-199 (NVGCSCGRAKDGGLEESDTTGSETVEVKKKDSLYSGQ) are cytoplasmic. A helical transmembrane segment spans residues 200 to 220 (VFLSIFALFVSLLGQAFMIGA). The Extracellular segment spans residues 221–235 (SEALKHKSMPPTNSG). The helical transmembrane segment at 236 to 256 (IFFSAGMSITLLGYNFLASSI) threads the bilayer. Residues 257–275 (PALFSMYIDPKLKVQLMPS) lie on the Cytoplasmic side of the membrane. Residues 276–296 (IGAISGIGKLVAPIVLAALYG) traverse the membrane as a helical segment. The Extracellular portion of the chain corresponds to 297–300 (TRLG). A helical transmembrane segment spans residues 301–321 (LSIAVGFGMILVAVSIPPLIW). The Cytoplasmic segment spans residues 322–327 (LRKKRC).

Its subcellular location is the membrane. This is an uncharacterized protein from Saccharomyces cerevisiae (strain ATCC 204508 / S288c) (Baker's yeast).